The primary structure comprises 623 residues: Chaperone protein DnaK (623 aa).

Phosphothreonine; by autocatalysis is present on Thr175. A disordered region spans residues 580 to 623 (PEGAQGAGFDPNNMGGANAGNASAENDKKDDNVVDADYKVEDDK). Over residues 591-603 (NNMGGANAGNASA) the composition is skewed to low complexity. Over residues 604–623 (ENDKKDDNVVDADYKVEDDK) the composition is skewed to basic and acidic residues.

The protein belongs to the heat shock protein 70 family.

Acts as a chaperone. This chain is Chaperone protein DnaK, found in Clostridium botulinum (strain Okra / Type B1).